A 126-amino-acid polypeptide reads, in one-letter code: Large ribosomal subunit protein bL17c (126 aa).

Residues 1 to 10 (MIDNGGRFFA) constitute a chloroplast transit peptide.

In terms of assembly, component of the chloroplast large ribosomal subunit (LSU). Mature 70S chloroplast ribosomes of higher plants consist of a small (30S) and a large (50S) subunit. The 30S small subunit contains 1 molecule of ribosomal RNA (16S rRNA) and 24 different proteins. The 50S large subunit contains 3 rRNA molecules (23S, 5S and 4.5S rRNA) and 33 different proteins.

It is found in the plastid. The protein resides in the chloroplast. Functionally, component of the chloroplast ribosome (chloro-ribosome), a dedicated translation machinery responsible for the synthesis of chloroplast genome-encoded proteins, including proteins of the transcription and translation machinery and components of the photosynthetic apparatus. This chain is Large ribosomal subunit protein bL17c (RPL17), found in Spinacia oleracea (Spinach).